The sequence spans 371 residues: tRNA-specific 2-thiouridylase MnmA (371 aa).

ATP contacts are provided by residues 13-20 and M39; that span reads GMSGGVDS. An interaction with target base in tRNA region spans residues 99-101; that stretch reads NPD. C104 (nucleophile) is an active-site residue. The cysteines at positions 104 and 200 are disulfide-linked. G128 provides a ligand contact to ATP. The segment at 150-152 is interaction with tRNA; it reads KDQ. C200 serves as the catalytic Cysteine persulfide intermediate. Residues 308-309 form an interaction with tRNA region; the sequence is RY.

This sequence belongs to the MnmA/TRMU family.

The protein localises to the cytoplasm. The catalysed reaction is S-sulfanyl-L-cysteinyl-[protein] + uridine(34) in tRNA + AH2 + ATP = 2-thiouridine(34) in tRNA + L-cysteinyl-[protein] + A + AMP + diphosphate + H(+). Catalyzes the 2-thiolation of uridine at the wobble position (U34) of tRNA, leading to the formation of s(2)U34. The polypeptide is tRNA-specific 2-thiouridylase MnmA (Listeria innocua serovar 6a (strain ATCC BAA-680 / CLIP 11262)).